Reading from the N-terminus, the 319-residue chain is Tyrosine--tRNA ligase (319 aa).

Position 35 (tyrosine 35) interacts with L-tyrosine. The 'HIGH' region signature appears at proline 40–histidine 48. Residues tyrosine 156, glutamine 160, aspartate 163, and glutamine 178 each coordinate L-tyrosine. A 'KMSKS' region motif is present at residues lysine 213 to serine 217. Serine 216 is a binding site for ATP.

Belongs to the class-I aminoacyl-tRNA synthetase family. TyrS type 3 subfamily. In terms of assembly, homodimer.

The protein localises to the cytoplasm. The catalysed reaction is tRNA(Tyr) + L-tyrosine + ATP = L-tyrosyl-tRNA(Tyr) + AMP + diphosphate + H(+). Catalyzes the attachment of tyrosine to tRNA(Tyr) in a two-step reaction: tyrosine is first activated by ATP to form Tyr-AMP and then transferred to the acceptor end of tRNA(Tyr). The polypeptide is Tyrosine--tRNA ligase (Methanobrevibacter smithii (strain ATCC 35061 / DSM 861 / OCM 144 / PS)).